We begin with the raw amino-acid sequence, 480 residues long: Aromatic-L-amino-acid decarboxylase (480 aa).

N6-(pyridoxal phosphate)lysine is present on Lys292.

The protein belongs to the group II decarboxylase family. It depends on pyridoxal 5'-phosphate as a cofactor.

The catalysed reaction is L-tryptophan + H(+) = tryptamine + CO2. It catalyses the reaction L-phenylalanine + H(+) = 2-phenylethylamine + CO2. The enzyme catalyses 5-hydroxy-L-tryptophan + H(+) = serotonin + CO2. It carries out the reaction L-dopa + H(+) = dopamine + CO2. Functionally, involved in bacillamide C biosynthesis. Catalyzes the decarboxylation of L-tryptophan to tryptamine. The tryptamine obtained is then probably incorporated into the bacillamide C peptide, which is derived from the amino acids alanine, cysteine and tryptophan through nonribosomal peptide synthetase (NRPS) biosynthesis strategy. L-tryptophan is the best substrate, but the enzyme displays broad substrate specificity for various aromatic amino acids in vitro and it can also catalyze the decarboxylation of L-phenylalanine, 5-hydroxy-L-tryptophan (L-HTP) and L-DOPA, with lower efficiency. Exhibits weak activity with L-tyrosine. The chain is Aromatic-L-amino-acid decarboxylase from Bacillus atrophaeus.